Here is a 1741-residue protein sequence, read N- to C-terminus: Meiosis regulator and mRNA stability factor 1 (1741 aa).

One can recognise an NYN domain in the interval 345–482 (IGVFWDIENC…ALLHHAHELV (138 aa)). Disordered stretches follow at residues 594 to 636 (KVKS…GSVI), 659 to 678 (TENH…SHAA), and 683 to 716 (LTTK…PVDK). Residues 659–668 (TENHQEHLRE) are compositionally biased toward basic and acidic residues. Residues 788–867 (ADIQISNIDY…KRIQVSLATG (80 aa)) form the RRM domain. 8 HTH OST-type domains span residues 872-946 (SLSL…SPLG), 1000-1076 (SLKT…HNKP), 1097-1171 (QLIQ…LTHR), 1173-1248 (QVKR…IPKR), 1257-1332 (RTKQ…TEVE), 1333-1408 (QVKA…INRK), 1409-1483 (SLRT…VRLT), and 1484-1558 (NLYM…LKND). The segment covering 1684–1700 (KLTSGSVASSTAENTSV) has biased composition (polar residues). The segment at 1684-1727 (KLTSGSVASSTAENTSVPPRHSSETQLNKEAMDSPAKKQHKNKV) is disordered.

It localises to the peroxisome. Essential regulator of oogenesis required for female meiotic progression to repress transposable elements and preventing their mobilization, which is essential for the germline integrity. The chain is Meiosis regulator and mRNA stability factor 1 from Gallus gallus (Chicken).